The sequence spans 465 residues: Putative multidrug resistance protein MdtD (465 aa).

13 helical membrane-spanning segments follow: residues leucine 12–alanine 32, serine 49–alanine 69, isoleucine 72–cysteine 92, isoleucine 102–methionine 124, phenylalanine 138–valine 158, tryptophan 165–methionine 185, phenylalanine 195–aspartate 215, glycine 219–glycine 239, leucine 267–phenylalanine 287, isoleucine 290–serine 310, leucine 342–phenylalanine 362, leucine 393–leucine 413, and serine 430–phenylalanine 450.

This sequence belongs to the major facilitator superfamily. TCR/Tet family.

It localises to the cell inner membrane. In Yersinia pseudotuberculosis serotype O:1b (strain IP 31758), this protein is Putative multidrug resistance protein MdtD.